The sequence spans 132 residues: Agouti-signaling protein (132 aa).

Positions 1–22 (MDVTRLLLATLLVFLCFFTACS) are cleaved as a signal peptide. An N-linked (GlcNAc...) asparagine glycan is attached at asparagine 39. A disordered region spans residues 61-87 (QISRKEAEKKRSSKKEASMKKVARPRT). Residues 63–79 (SRKEAEKKRSSKKEASM) show a composition bias toward basic and acidic residues. 5 cysteine pairs are disulfide-bonded: cysteine 93/cysteine 108, cysteine 100/cysteine 114, cysteine 107/cysteine 125, cysteine 111/cysteine 132, and cysteine 116/cysteine 123. The Agouti domain maps to 93-132 (CVATRDSCKPPAPACCDPCASCQCRFFRSACSCRVLSLNC).

The protein resides in the secreted. Its function is as follows. Involved in the regulation of melanogenesis. The binding of ASP to MC1R precludes alpha-MSH initiated signaling and thus blocks production of cAMP, leading to a down-regulation of eumelanogenesis (brown/black pigment) and thus increasing synthesis of pheomelanin (yellow/red pigment). The protein is Agouti-signaling protein (ASIP) of Macaca nigrescens (Gorontalo macaque).